The chain runs to 255 residues: MRHPLVMGNWKLNGSTHMVNELITGLRQELSSVTGCDVAIAPPALYLSQAKQALAGSRIALGAQDVDVNLSGAFTGETSATMLKDIGAEYIIIGHSERRTYHQESDEFIAKKFAILKQQGLIPVLCIGETEQENEAGQTESVCARQIDAVLNTLGVAAFQGAVIAYEPVWAIGTGKSATPAQAQAVHKFIRDHIAQKDAAIAQQIIIQYGGSVNADNAAELFSQPDIDGALVGGASLKANAFAVIVKAAAAAKKA.

9-11 (NWK) contributes to the substrate binding site. His-95 acts as the Electrophile in catalysis. The active-site Proton acceptor is the Glu-167. Substrate is bound by residues Gly-173, Ser-212, and 233–234 (GG).

It belongs to the triosephosphate isomerase family. Homodimer.

It is found in the cytoplasm. It carries out the reaction D-glyceraldehyde 3-phosphate = dihydroxyacetone phosphate. It functions in the pathway carbohydrate biosynthesis; gluconeogenesis. Its pathway is carbohydrate degradation; glycolysis; D-glyceraldehyde 3-phosphate from glycerone phosphate: step 1/1. Its function is as follows. Involved in the gluconeogenesis. Catalyzes stereospecifically the conversion of dihydroxyacetone phosphate (DHAP) to D-glyceraldehyde-3-phosphate (G3P). This Photorhabdus laumondii subsp. laumondii (strain DSM 15139 / CIP 105565 / TT01) (Photorhabdus luminescens subsp. laumondii) protein is Triosephosphate isomerase.